Here is a 1197-residue protein sequence, read N- to C-terminus: DNA-directed RNA polymerase subunit beta (1197 aa).

Residues Gln-581–Val-597 are compositionally biased toward polar residues. Disordered stretches follow at residues Gln-581–Asp-603 and Glu-1172–Val-1197.

Belongs to the RNA polymerase beta chain family. As to quaternary structure, the RNAP catalytic core consists of 2 alpha, 1 beta, 1 beta' and 1 omega subunit. When a sigma factor is associated with the core the holoenzyme is formed, which can initiate transcription.

The catalysed reaction is RNA(n) + a ribonucleoside 5'-triphosphate = RNA(n+1) + diphosphate. DNA-dependent RNA polymerase catalyzes the transcription of DNA into RNA using the four ribonucleoside triphosphates as substrates. The protein is DNA-directed RNA polymerase subunit beta of Oenococcus oeni (strain ATCC BAA-331 / PSU-1).